The chain runs to 344 residues: Nicotinate-nucleotide--dimethylbenzimidazole phosphoribosyltransferase (344 aa).

Catalysis depends on glutamate 305, which acts as the Proton acceptor.

Belongs to the CobT family.

The enzyme catalyses 5,6-dimethylbenzimidazole + nicotinate beta-D-ribonucleotide = alpha-ribazole 5'-phosphate + nicotinate + H(+). The protein operates within nucleoside biosynthesis; alpha-ribazole biosynthesis; alpha-ribazole from 5,6-dimethylbenzimidazole: step 1/2. Its function is as follows. Catalyzes the synthesis of alpha-ribazole-5'-phosphate from nicotinate mononucleotide (NAMN) and 5,6-dimethylbenzimidazole (DMB). The sequence is that of Nicotinate-nucleotide--dimethylbenzimidazole phosphoribosyltransferase from Agrobacterium fabrum (strain C58 / ATCC 33970) (Agrobacterium tumefaciens (strain C58)).